The sequence spans 292 residues: Protein LRATD1 (292 aa).

Phosphoserine is present on Ser38. Residues 133–228 (PATEQPAPAP…CRFGKREFKA (96 aa)) form the LRAT domain.

Belongs to the LRATD family.

It is found in the cytoplasm. Its function is as follows. May play a role in cell morphology and motility. The chain is Protein LRATD1 from Mus musculus (Mouse).